A 540-amino-acid polypeptide reads, in one-letter code: Chaperonin GroEL 1 (540 aa).

ATP is bound by residues 29–32 (TLGP), 86–90 (DGTTT), Gly413, 477–479 (NAA), and Asp493.

It belongs to the chaperonin (HSP60) family. In terms of assembly, forms a cylinder of 14 subunits composed of two heptameric rings stacked back-to-back. Interacts with the co-chaperonin GroES.

Its subcellular location is the cytoplasm. It carries out the reaction ATP + H2O + a folded polypeptide = ADP + phosphate + an unfolded polypeptide.. In terms of biological role, together with its co-chaperonin GroES, plays an essential role in assisting protein folding. The GroEL-GroES system forms a nano-cage that allows encapsulation of the non-native substrate proteins and provides a physical environment optimized to promote and accelerate protein folding. The chain is Chaperonin GroEL 1 from Salinispora arenicola (strain CNS-205).